The primary structure comprises 68 residues: Negative regulatory protein YxlD (68 aa).

The next 2 helical transmembrane spans lie at 5 to 25 (EIIITVAACLIVLAQGIFLFI) and 37 to 57 (WGIVGLIQAPMPLICYYFFVI).

The protein resides in the cell membrane. Functionally, together with YxlE, is important for negative regulation of sigma Y activity, being the major negative regulator. The polypeptide is Negative regulatory protein YxlD (yxlD) (Bacillus subtilis (strain 168)).